The sequence spans 220 residues: Putative pyrophosphatase PpaX (220 aa).

Asp-9 acts as the Nucleophile in catalysis.

Belongs to the HAD-like hydrolase superfamily. PpaX family. Requires Mg(2+) as cofactor.

It catalyses the reaction diphosphate + H2O = 2 phosphate + H(+). The protein is Putative pyrophosphatase PpaX of Caldanaerobacter subterraneus subsp. tengcongensis (strain DSM 15242 / JCM 11007 / NBRC 100824 / MB4) (Thermoanaerobacter tengcongensis).